The following is a 446-amino-acid chain: MAQLTALDAGFLKSRDPERHPGLAIGAVAVVNGAAPSYDQLKTVLTERIKSIPRCTQVLATEWIDYPGFDLTQHVRRVALPRPGDEAELFRAIALALERPLDPDRPLWECWIIEGLNGNRWAILIKIHHCMAGAMSAAHLLARLCDDADGSAFANNVDIKQIPPYGDARSWAETLWRMSVSIAGAVCTAAARAVSWPAVTSPAGPVTTRRRYQAVRVPRDAVDAVCHKFGVTANDVALAAITEGFRTVLLHRGQQPRADSLRTLEKTDGSSAMLPYLPVEYDDPVRRLRTVHNRSQQSGRRQPDSLSDYTPLMLCAKMIHALARLPQQGIVTLATSAPRPRHQLRLMGQKMDQVLPIPPTALQLSTGIAVLSYGDELVFGITADYDAASEMQQLVNGIELGVARLVALSDDSVLLFTKDRRKRSSRALPSAARRGRPSVPTARARH.

Catalysis depends on H129, which acts as the Proton acceptor. The disordered stretch occupies residues 425–446; the sequence is SRALPSAARRGRPSVPTARARH.

It belongs to the long-chain O-acyltransferase family.

It carries out the reaction an acyl-CoA + a 1,2-diacyl-sn-glycerol = a triacyl-sn-glycerol + CoA. The enzyme catalyses di-(9Z)-octadecenoylglycerol + (9Z)-octadecenoyl-CoA = 1,2,3-tri-(9Z-octadecenoyl)-glycerol + CoA. The protein operates within glycerolipid metabolism; triacylglycerol biosynthesis. Catalyzes the terminal and only committed step in triacylglycerol synthesis by using diacylglycerol and fatty acyl CoA as substrates. Required for storage lipid synthesis. Its function is as follows. Upon expression in E.coli functions weakly as a triacylglycerol synthase, making triacylglycerol (TG) from diolein and long-chain fatty acyl-CoA. Has no wax synthase activity to produce wax esters. The protein is Putative diacyglycerol O-acyltransferase Rv3371 of Mycobacterium tuberculosis (strain ATCC 25618 / H37Rv).